Here is a 520-residue protein sequence, read N- to C-terminus: tRNA (guanine-N(7)-)-methyltransferase non-catalytic subunit TRM82 (520 aa).

Residues 51–102 (PLDSEISPDRASSAGTCAEPPEKRRKLTPPVDESGEAQTEQSAKAKARKSQT) form a disordered region. 3 WD repeats span residues 105 to 145 (QAWS…KLTQ), 244 to 291 (GHVS…HIIH), and 296 to 338 (GHTS…QTIP).

The protein belongs to the WD repeat TRM82 family. In terms of assembly, forms a heterodimer with the catalytic subunit TRM8.

It is found in the nucleus. The protein operates within tRNA modification; N(7)-methylguanine-tRNA biosynthesis. In terms of biological role, required for the formation of N(7)-methylguanine at position 46 (m7G46) in tRNA. In the complex, it is required to stabilize and induce conformational changes of the catalytic subunit. The sequence is that of tRNA (guanine-N(7)-)-methyltransferase non-catalytic subunit TRM82 from Coccidioides immitis (strain RS) (Valley fever fungus).